A 203-amino-acid polypeptide reads, in one-letter code: Outer-membrane lipoprotein carrier protein (203 aa).

An N-terminal signal peptide occupies residues 1-21 (MKKQLMTSCLFAAVLAAPAFA).

This sequence belongs to the LolA family. Monomer.

The protein localises to the periplasm. In terms of biological role, participates in the translocation of lipoproteins from the inner membrane to the outer membrane. Only forms a complex with a lipoprotein if the residue after the N-terminal Cys is not an aspartate (The Asp acts as a targeting signal to indicate that the lipoprotein should stay in the inner membrane). The chain is Outer-membrane lipoprotein carrier protein from Sodalis glossinidius (strain morsitans).